The chain runs to 165 residues: Phosphopantetheine adenylyltransferase (165 aa).

Serine 9 lines the substrate pocket. ATP contacts are provided by residues 9–10 (SF) and histidine 17. Residues lysine 41, isoleucine 75, and arginine 89 each coordinate substrate. ATP-binding positions include 90-92 (GVR), glutamate 100, and 125-131 (YLFVRSD).

This sequence belongs to the bacterial CoaD family. As to quaternary structure, homohexamer. Requires Mg(2+) as cofactor.

The protein localises to the cytoplasm. It carries out the reaction (R)-4'-phosphopantetheine + ATP + H(+) = 3'-dephospho-CoA + diphosphate. It participates in cofactor biosynthesis; coenzyme A biosynthesis; CoA from (R)-pantothenate: step 4/5. In terms of biological role, reversibly transfers an adenylyl group from ATP to 4'-phosphopantetheine, yielding dephospho-CoA (dPCoA) and pyrophosphate. This chain is Phosphopantetheine adenylyltransferase, found in Borrelia duttonii (strain Ly).